A 752-amino-acid polypeptide reads, in one-letter code: Pre-mRNA-processing factor 39 (752 aa).

Positions 1-148 (MEDSGESMTG…DPAAPQEPEL (148 aa)) are disordered. Over residues 28–42 (TTGTDDVTGLSTSDL) the composition is skewed to polar residues. Low complexity-rich tracts occupy residues 43-56 (TTEQ…QTQP), 76-94 (QSAS…PPES), and 133-148 (EPAA…EPEL). HAT repeat units lie at residues 180-212 (NHLL…IERK), 214-246 (GYIQ…FLRE), and 254-289 (EAES…WETE). The interval 347 to 374 (NKPSGDEDAETEAPGEELPPGTEDLPDP) is disordered. Residues 352–361 (DEDAETEAPG) show a composition bias toward acidic residues. 2 HAT repeats span residues 408 to 440 (AFEE…FELE) and 442 to 474 (GTPE…YLES). A compositionally biased stretch (basic and acidic residues) spans 678–699 (SFKRKAENGSEEPDAKRQRTDD). Residues 678–703 (SFKRKAENGSEEPDAKRQRTDDQSVA) are disordered. The stretch at 700-731 (QSVASGQMMDMQANHAGYNYNNWYQYNSWGSQ) is one HAT 6 repeat.

Belongs to the PRP39 family.

The protein resides in the nucleus. Functionally, involved in pre-mRNA splicing. This is Pre-mRNA-processing factor 39 (prpf39) from Danio rerio (Zebrafish).